A 153-amino-acid polypeptide reads, in one-letter code: uncharacterized protein (153 aa).

3 consecutive transmembrane segments (helical) span residues 17–37, 44–64, and 118–138; these read ITLIGYWIASILAIIIYSMFF, FLLCLLLPTPIIWFNILIGMG, and FVFIVGLVLIVGFTIITTLII.

This sequence to M.jannaschii MJ0129 and MJ0554.

The protein localises to the cell membrane. This is an uncharacterized protein from Methanocaldococcus jannaschii (strain ATCC 43067 / DSM 2661 / JAL-1 / JCM 10045 / NBRC 100440) (Methanococcus jannaschii).